The sequence spans 260 residues: Triosephosphate isomerase (260 aa).

11–13 (NWK) contributes to the substrate binding site. Catalysis depends on His103, which acts as the Electrophile. Catalysis depends on Glu175, which acts as the Proton acceptor. Residues Gly181, Ser220, and 241-242 (GG) each bind substrate.

Belongs to the triosephosphate isomerase family. In terms of assembly, homodimer.

The protein resides in the cytoplasm. The enzyme catalyses D-glyceraldehyde 3-phosphate = dihydroxyacetone phosphate. Its pathway is carbohydrate biosynthesis; gluconeogenesis. The protein operates within carbohydrate degradation; glycolysis; D-glyceraldehyde 3-phosphate from glycerone phosphate: step 1/1. Its function is as follows. Involved in the gluconeogenesis. Catalyzes stereospecifically the conversion of dihydroxyacetone phosphate (DHAP) to D-glyceraldehyde-3-phosphate (G3P). This is Triosephosphate isomerase from Shewanella sp. (strain MR-4).